A 399-amino-acid chain; its full sequence is Protein IQ-DOMAIN 25 (399 aa).

The short motif at 1–8 (MRKNLTKL) is the Nuclear localization signal element. 2 calmodulin-binding regions span residues 81–91 (KERRTHAIAVA) and 99–110 (DAAVAAAKAAAA). 2 IQ domains span residues 130–158 (EHRA…GVVK) and 159–181 (IQAL…SMEA). Disordered regions lie at residues 198-219 (NGNA…ENRN), 262-302 (SPLS…SPAR), and 346-377 (LRSH…VRMQ). Polar residues predominate over residues 285-294 (KFPTAQSTPR).

It belongs to the IQD family. Binds to multiple calmodulin (CaM) in the presence of Ca(2+) and CaM-like proteins.

The protein resides in the nucleus. Its subcellular location is the cell membrane. Functionally, may be involved in cooperative interactions with calmodulins or calmodulin-like proteins. Recruits calmodulin proteins to microtubules, thus being a potential scaffold in cellular signaling and trafficking. May associate with nucleic acids and regulate gene expression at the transcriptional or post-transcriptional level. This Arabidopsis thaliana (Mouse-ear cress) protein is Protein IQ-DOMAIN 25.